Reading from the N-terminus, the 142-residue chain is Putative pre-16S rRNA nuclease (142 aa).

This sequence belongs to the YqgF nuclease family.

Its subcellular location is the cytoplasm. In terms of biological role, could be a nuclease involved in processing of the 5'-end of pre-16S rRNA. In Desulfitobacterium hafniense (strain DSM 10664 / DCB-2), this protein is Putative pre-16S rRNA nuclease.